Here is a 345-residue protein sequence, read N- to C-terminus: BAG family molecular chaperone regulator 1 (345 aa).

The segment at 1 to 137 is disordered; that stretch reads MAQRGGARRP…STRSEEVTRE (137 aa). Residues 68 to 80 show a composition bias toward basic residues; it reads RRPRMKKKTRRRS. Over residues 81–91 the composition is skewed to basic and acidic residues; it reads TRSEELTRSEE. Positions 95-114 are enriched in low complexity; that stretch reads SEEATWSEEATQSEEATQGE. 7 consecutive repeat copies span residues 96–101, 102–107, 108–113, 114–119, 120–125, 126–131, and 132–137. The tract at residues 96-137 is 7 X 6 AA tandem repeat of E-E-X(4); that stretch reads EEATWSEEATQSEEATQGEEMNRSQEVTRDEESTRSEEVTRE. A compositionally biased stretch (basic and acidic residues) spans 115 to 137; that stretch reads EMNRSQEVTRDEESTRSEEVTRE. The region spanning 144-224 is the Ubiquitin-like domain; that stretch reads LTVTVTHSNE…VMLIGKKNSP (81 aa). An interaction with HSPA8 region spans residues 172-219; sequence DLAQVVEEVIGVPQSFQKLIFKGKSLKEMETPLSALGIQDGCRVMLIG. Positions 216-345 are interaction with PPP1R15A; sequence MLIGKKNSPQ…LQSTNFALAE (130 aa). The residue at position 223 (S223) is a Phosphoserine. A BAG domain is found at 246 to 326; the sequence is QLEELNKELT…AFLAECDTVE (81 aa).

Homodimer. Forms a heteromeric complex with HSP70/HSC70. Binds to the ATPase domain of HSP/HSC70 chaperones. Isoform 1, isoform 3 and isoform 4 but not isoform 2 interact with HSPA8/HSC70. Interacts with NR3C1. Interacts with the N-terminal region of MAPRE2. Interacts with PPP1R15A. Interacts with BCL2 in an ATP-dependent manner. Isoform 2 does not interact with BCL2. Interacts with SIAH1. Interacts with HSPA8 (via NBD). Interacts with HSPA1A (via NBD) and HSPA1B (via NBD). Interacts with SIAH2. Interacts with ESR1; the interaction is promoted in the absence of estradiol (17-beta-estradiol/E2). Post-translationally, ubiquitinated; mediated by SIAH1 or SIAH2 and leading to its subsequent proteasomal degradation. In terms of tissue distribution, isoform 4 is the most abundantly expressed isoform. It is ubiquitously expressed throughout most tissues, except the liver, colon, breast and uterine myometrium. Isoform 1 is expressed in the ovary and testis. Isoform 4 is expressed in several types of tumor cell lines, and at consistently high levels in leukemia and lymphoma cell lines. Isoform 1 is expressed in the prostate, breast and leukemia cell lines. Isoform 3 is the least abundant isoform in tumor cell lines (at protein level).

It is found in the nucleus. It localises to the cytoplasm. Functionally, co-chaperone for HSP70 and HSC70 chaperone proteins. Acts as a nucleotide-exchange factor (NEF) promoting the release of ADP from the HSP70 and HSC70 proteins thereby triggering client/substrate protein release. Nucleotide release is mediated via its binding to the nucleotide-binding domain (NBD) of HSPA8/HSC70 where as the substrate release is mediated via its binding to the substrate-binding domain (SBD) of HSPA8/HSC70. Inhibits the pro-apoptotic function of PPP1R15A, and has anti-apoptotic activity. Markedly increases the anti-cell death function of BCL2 induced by various stimuli. Involved in the STUB1-mediated proteasomal degradation of ESR1 in response to age-related circulating estradiol (17-beta-estradiol/E2) decline, thereby promotes neuronal apoptosis in response to ischemic reperfusion injury. In Homo sapiens (Human), this protein is BAG family molecular chaperone regulator 1 (BAG1).